The primary structure comprises 932 residues: Isoleucine--tRNA ligase (932 aa).

Residues 58–68 (PYANGDIHIGH) carry the 'HIGH' region motif. E559 serves as a coordination point for L-isoleucyl-5'-AMP. The 'KMSKS' region motif lies at 600–604 (KMSKS). K603 lines the ATP pocket. Zn(2+) is bound by residues C895, C898, C915, and C918.

Belongs to the class-I aminoacyl-tRNA synthetase family. IleS type 1 subfamily. Monomer. Zn(2+) is required as a cofactor.

Its subcellular location is the cytoplasm. It carries out the reaction tRNA(Ile) + L-isoleucine + ATP = L-isoleucyl-tRNA(Ile) + AMP + diphosphate. In terms of biological role, catalyzes the attachment of isoleucine to tRNA(Ile). As IleRS can inadvertently accommodate and process structurally similar amino acids such as valine, to avoid such errors it has two additional distinct tRNA(Ile)-dependent editing activities. One activity is designated as 'pretransfer' editing and involves the hydrolysis of activated Val-AMP. The other activity is designated 'posttransfer' editing and involves deacylation of mischarged Val-tRNA(Ile). The protein is Isoleucine--tRNA ligase of Saccharophagus degradans (strain 2-40 / ATCC 43961 / DSM 17024).